The following is a 302-amino-acid chain: Pyridoxal 5'-phosphate synthase subunit PdxS (302 aa).

Asp-32 lines the D-ribose 5-phosphate pocket. The active-site Schiff-base intermediate with D-ribose 5-phosphate is Lys-89. Position 161 (Gly-161) interacts with D-ribose 5-phosphate. Arg-173 contacts D-glyceraldehyde 3-phosphate. D-ribose 5-phosphate is bound by residues Gly-222 and 243-244 (GS). Positions 278-302 (GIGKGMKGQSNEDLPDEEKLQGRGV) are disordered.

Belongs to the PdxS/SNZ family. In the presence of PdxT, forms a dodecamer of heterodimers.

The catalysed reaction is aldehydo-D-ribose 5-phosphate + D-glyceraldehyde 3-phosphate + L-glutamine = pyridoxal 5'-phosphate + L-glutamate + phosphate + 3 H2O + H(+). It participates in cofactor biosynthesis; pyridoxal 5'-phosphate biosynthesis. Its function is as follows. Catalyzes the formation of pyridoxal 5'-phosphate from ribose 5-phosphate (RBP), glyceraldehyde 3-phosphate (G3P) and ammonia. The ammonia is provided by the PdxT subunit. Can also use ribulose 5-phosphate and dihydroxyacetone phosphate as substrates, resulting from enzyme-catalyzed isomerization of RBP and G3P, respectively. The protein is Pyridoxal 5'-phosphate synthase subunit PdxS of Halorubrum lacusprofundi (strain ATCC 49239 / DSM 5036 / JCM 8891 / ACAM 34).